We begin with the raw amino-acid sequence, 283 residues long: Fructose-1,6-bisphosphatase class 1 (283 aa).

4 residues coordinate Mg(2+): glutamate 67, aspartate 86, leucine 88, and aspartate 89. Substrate-binding positions include 89 to 92 (DGSS), tyrosine 195, and lysine 225. Mg(2+) is bound at residue glutamate 231.

The protein belongs to the FBPase class 1 family. As to quaternary structure, homotetramer. It depends on Mg(2+) as a cofactor.

It localises to the cytoplasm. The catalysed reaction is beta-D-fructose 1,6-bisphosphate + H2O = beta-D-fructose 6-phosphate + phosphate. It functions in the pathway carbohydrate biosynthesis; gluconeogenesis. In Natronomonas pharaonis (strain ATCC 35678 / DSM 2160 / CIP 103997 / JCM 8858 / NBRC 14720 / NCIMB 2260 / Gabara) (Halobacterium pharaonis), this protein is Fructose-1,6-bisphosphatase class 1.